Here is a 346-residue protein sequence, read N- to C-terminus: Phosphate acyltransferase (346 aa).

This sequence belongs to the PlsX family. In terms of assembly, homodimer. Probably interacts with PlsY.

The protein localises to the cytoplasm. The enzyme catalyses a fatty acyl-[ACP] + phosphate = an acyl phosphate + holo-[ACP]. It participates in lipid metabolism; phospholipid metabolism. Its function is as follows. Catalyzes the reversible formation of acyl-phosphate (acyl-PO(4)) from acyl-[acyl-carrier-protein] (acyl-ACP). This enzyme utilizes acyl-ACP as fatty acyl donor, but not acyl-CoA. The sequence is that of Phosphate acyltransferase from Geotalea uraniireducens (strain Rf4) (Geobacter uraniireducens).